The primary structure comprises 308 residues: ATP synthase gamma chain (308 aa).

The protein belongs to the ATPase gamma chain family. In terms of assembly, F-type ATPases have 2 components, CF(1) - the catalytic core - and CF(0) - the membrane proton channel. CF(1) has five subunits: alpha(3), beta(3), gamma(1), delta(1), epsilon(1). CF(0) has three main subunits: a, b and c.

Its subcellular location is the cell membrane. Functionally, produces ATP from ADP in the presence of a proton gradient across the membrane. The gamma chain is believed to be important in regulating ATPase activity and the flow of protons through the CF(0) complex. The polypeptide is ATP synthase gamma chain (Lacticaseibacillus paracasei (strain ATCC 334 / BCRC 17002 / CCUG 31169 / CIP 107868 / KCTC 3260 / NRRL B-441) (Lactobacillus paracasei)).